The primary structure comprises 420 residues: Isocitrate dehydrogenase [NADP] (420 aa).

NADP(+) is bound by residues 75–77 (TIT) and R82. T77 contributes to the substrate binding site. Residues 94-100 (SPNGTIR), R109, and R132 each bind substrate. D252 is a binding site for Mn(2+). K260 is a binding site for NADP(+). Residue D275 participates in Mn(2+) binding. Residues 310-315 (GTVTRH) and N328 contribute to the NADP(+) site.

The protein belongs to the isocitrate and isopropylmalate dehydrogenases family. Mg(2+) is required as a cofactor. It depends on Mn(2+) as a cofactor.

It catalyses the reaction D-threo-isocitrate + NADP(+) = 2-oxoglutarate + CO2 + NADPH. May function in the production of NADPH for fatty acid and sterol synthesis. The protein is Isocitrate dehydrogenase [NADP] (IDP3) of Saccharomyces cerevisiae (strain ATCC 204508 / S288c) (Baker's yeast).